A 169-amino-acid chain; its full sequence is NAD(P)H-quinone oxidoreductase subunit 6, chloroplastic (169 aa).

Helical transmembrane passes span 7–27, 29–49, 58–78, 90–110, and 139–159; these read FSSA…IFLP, IVYA…IYVL, AQVL…IMLV, SPPL…VQMI, and LLAF…AIVL.

The protein belongs to the complex I subunit 6 family. As to quaternary structure, NDH is composed of at least 16 different subunits, 5 of which are encoded in the nucleus.

The protein localises to the plastid. Its subcellular location is the chloroplast thylakoid membrane. The enzyme catalyses a plastoquinone + NADH + (n+1) H(+)(in) = a plastoquinol + NAD(+) + n H(+)(out). It catalyses the reaction a plastoquinone + NADPH + (n+1) H(+)(in) = a plastoquinol + NADP(+) + n H(+)(out). In terms of biological role, NDH shuttles electrons from NAD(P)H:plastoquinone, via FMN and iron-sulfur (Fe-S) centers, to quinones in the photosynthetic chain and possibly in a chloroplast respiratory chain. The immediate electron acceptor for the enzyme in this species is believed to be plastoquinone. Couples the redox reaction to proton translocation, and thus conserves the redox energy in a proton gradient. The protein is NAD(P)H-quinone oxidoreductase subunit 6, chloroplastic (ndhG) of Nephroselmis olivacea (Green alga).